We begin with the raw amino-acid sequence, 1406 residues long: Enhancer of mRNA-decapping protein 4 (1406 aa).

The residue at position 2 (alanine 2) is an N-acetylalanine. Residues serine 3 and serine 6 each carry the phosphoserine modification. N6-acetyllysine is present on lysine 125. 4 WD repeats span residues 174-214 (GFTG…GKIQ), 230-277 (NHFR…SSHN), 295-334 (GHST…QDEP), and 342-393 (PHDG…CLQT). Serine 560, serine 565, serine 583, and serine 585 each carry phosphoserine. Disordered regions lie at residues 604 to 631 (SLQQ…SSSS) and 667 to 686 (SLTL…SLLP). The span at 609–631 (SASPSSSSSSSSSSSSSSSSSSS) shows a compositional bias: low complexity. Phosphoserine occurs at positions 680, 712, 727, and 729. Positions 719-744 (EPLGLPQASPSRTRSPDVISSASTAL) are disordered. The segment covering 726–744 (ASPSRTRSPDVISSASTAL) has biased composition (polar residues). Threonine 731 bears the Phosphothreonine mark. Phosphoserine occurs at positions 733 and 745. 2 disordered regions span residues 782–855 (HLLS…NGLQ) and 873–951 (QRDS…VAEP). 2 stretches are compositionally biased toward polar residues: residues 823 to 832 (EVATPDSQVW) and 841 to 852 (ETCSTLTESPRN). A Phosphothreonine modification is found at threonine 826. Phosphoserine is present on residues serine 849 and serine 876. Threonine 879 carries the post-translational modification Phosphothreonine. Serine 880, serine 884, serine 892, serine 895, and serine 897 each carry phosphoserine. At threonine 906 the chain carries Phosphothreonine. Residues 971-1030 (HNQEELLQRLCAQLEGLQSTVTDHVERALETRHEQEQRRLERALAEGQQRGGQLQEQLTQ) adopt a coiled-coil conformation. A Phosphoserine modification is found at serine 1385.

It belongs to the WD repeat EDC4 family. Part of a decapping complex consisting of DCP1A, DCP2, EDC3, EDC4 and probably DDX6. Part of a complex consisting of DCP1A, EDC3, EDC4 and DDX6. Part of a complex consisting of DCP1B, EDC3, EDC4 and DDX6. Interacts with DCP2. Interacts with RC3H1. Interacts with NBDY. Interacts with Tex19.1 and, probably, Tex19.2. Interacts with LSM14A. Interacts with DDX6.

It localises to the cytoplasm. Its subcellular location is the P-body. The protein localises to the nucleus. In the process of mRNA degradation, seems to play a role in mRNA decapping. Component of a complex containing DCP2 and DCP1A which functions in decapping of ARE-containing mRNAs. Promotes complex formation between DCP1A and DCP2. Enhances the catalytic activity of DCP2 (in vitro). The chain is Enhancer of mRNA-decapping protein 4 from Mus musculus (Mouse).